Here is a 588-residue protein sequence, read N- to C-terminus: Phomenoic acid biosynthesis cluster cytochrome P450 monooxygenase (588 aa).

The first 21 residues, 1-21 (MSFARIFITILLLFILRRAFK), serve as a signal peptide directing secretion. N-linked (GlcNAc...) asparagine glycosylation occurs at Asn-293. The segment covering 467–486 (HQSDPDRFKPSPDAPDEKLF) has biased composition (basic and acidic residues). Positions 467–490 (HQSDPDRFKPSPDAPDEKLFRPSR) are disordered. A heme-binding site is contributed by Cys-519.

This sequence belongs to the cytochrome P450 family. Requires heme as cofactor.

It functions in the pathway secondary metabolite biosynthesis. In terms of biological role, cytochrome P450 monooxygenase; part of the gene cluster that mediates the biosynthesis of phomenoic acid, a long chain aliphatic carboxylic acid that does not appear to be essential for pathogenicity but may play a role in allowing to outcompete other fungi in the environmental niche via its antifungal properties. The polyketide synthase produces the long methylated aliphatic carboxylic acid chain of phomenoic acid. The cluster-specific cytochrome P450 monooxygenase may then hydroxylate the methyl group of carbon 31. The putative dehydrogenase YogA, which has no obvious role in phomenoic acid biosynthesis, may further modify phomenoic acid to produce a compound not identified yet. This chain is Phomenoic acid biosynthesis cluster cytochrome P450 monooxygenase, found in Leptosphaeria maculans (strain JN3 / isolate v23.1.3 / race Av1-4-5-6-7-8) (Blackleg fungus).